Reading from the N-terminus, the 1393-residue chain is DNA-directed RNA polymerase subunit beta' (1393 aa).

Cys72, Cys74, Cys87, and Cys90 together coordinate Zn(2+). Asp463, Asp465, and Asp467 together coordinate Mg(2+). Zn(2+) contacts are provided by Cys812, Cys887, Cys894, and Cys897.

The protein belongs to the RNA polymerase beta' chain family. The RNAP catalytic core consists of 2 alpha, 1 beta, 1 beta' and 1 omega subunit. When a sigma factor is associated with the core the holoenzyme is formed, which can initiate transcription. The cofactor is Mg(2+). Requires Zn(2+) as cofactor.

The enzyme catalyses RNA(n) + a ribonucleoside 5'-triphosphate = RNA(n+1) + diphosphate. In terms of biological role, DNA-dependent RNA polymerase catalyzes the transcription of DNA into RNA using the four ribonucleoside triphosphates as substrates. The sequence is that of DNA-directed RNA polymerase subunit beta' from Chlamydia pneumoniae (Chlamydophila pneumoniae).